A 257-amino-acid chain; its full sequence is NAD kinase (257 aa).

Asp46 acts as the Proton acceptor in catalysis. NAD(+) contacts are provided by residues 46–47 (DG), 116–117 (NE), Asp146, Ala154, 157–162 (TAYNLS), and Asn218.

This sequence belongs to the NAD kinase family. The cofactor is a divalent metal cation.

Its subcellular location is the cytoplasm. It carries out the reaction NAD(+) + ATP = ADP + NADP(+) + H(+). Its function is as follows. Involved in the regulation of the intracellular balance of NAD and NADP, and is a key enzyme in the biosynthesis of NADP. Catalyzes specifically the phosphorylation on 2'-hydroxyl of the adenosine moiety of NAD to yield NADP. This is NAD kinase from Brucella suis biovar 1 (strain 1330).